Here is a 312-residue protein sequence, read N- to C-terminus: RNA binding protein fox-1 homolog 3 (312 aa).

Over residues 1 to 29 (MAQPYPPAQYPPPPQNGIPAEYAPPPPHP) the composition is skewed to pro residues. Positions 1-104 (MAQPYPPAQY…KQQPKRLHVS (104 aa)) are disordered. Residues 49–87 (TPAQTHPEQPGSEASTQPIAGTQTVPQTDEAAQTDSQPL) show a composition bias toward polar residues. An RRM domain is found at 100–175 (RLHVSNIPFR…RKIEVNNATA (76 aa)). Arginine 223 carries the asymmetric dimethylarginine; alternate modification. Arginine 223 bears the Omega-N-methylarginine; alternate mark. Arginine 272 is subject to Asymmetric dimethylarginine.

It localises to the nucleus. Its subcellular location is the cytoplasm. Pre-mRNA alternative splicing regulator. Regulates alternative splicing of RBFOX2 to enhance the production of mRNA species that are targeted for nonsense-mediated decay (NMD). The sequence is that of RNA binding protein fox-1 homolog 3 (RBFOX3) from Homo sapiens (Human).